Consider the following 1135-residue polypeptide: Envelopment polyprotein (1135 aa).

The signal sequence occupies residues 1–35 (MRILKLLELVVKVSLFTIALSSVLLAFLIFRATDA). Residues 36–314 (KVEIIRGDHP…KYSKSIYKQT (279 aa)) are Lumenal-facing. The short motif at 41 to 43 (RGD) is the Cell attachment site element. Disulfide bonds link C114–C145 and C122–C156. N116 carries N-linked (GlcNAc...) asparagine; by host glycosylation. Residues 177 to 195 (LDKKRHFSVGGKFFISESL) are non-covalent dimerization. The N-linked (GlcNAc...) asparagine; by host glycan is linked to N210. C224 and C285 are oxidised to a cystine. A helical transmembrane segment spans residues 315–366 (ACINFSWIRLILIALLIYFPIRWLVNKTTKPLFLWYDLMGLITYPVLLLINC). Residues 367 to 484 (LWKYFPLKCS…VPGCPFLVTS (118 aa)) are Cytoplasmic-facing. Residues 437–484 (LSLSLLKFVTEILIGLVILSQMPMSMAQTTQCLSGCFYVPGCPFLVTS) form a signal for signal peptide peptidase region. Residues 485-1067 (KFEKCSEKDQ…YFGSFFDTIR (583 aa)) are Lumenal-facing. N-linked (GlcNAc...) asparagine; by host glycans are attached at residues N605 and N980. Residues 1068-1088 (VVLLIAFIFLVTYFCSILTSI) traverse the membrane as a helical segment. Over 1089–1135 (CKGYVKNESYKSRSKIEDDDEPEIKAPMLMKDTMTRRRPPMDFSHLV) the chain is Cytoplasmic.

This sequence belongs to the tospovirus envelope glycoprotein family. In terms of assembly, homodimer; disulfide-linked. Heterodimer with Glycoprotein C. Interacts with nucleoprotein. As to quaternary structure, heterodimer with Glycoprotein N. Interacts with nucleoprotein. Post-translationally, specific enzymatic cleavages in vivo yield mature proteins including Glycoprotein N and Glycoprotein C. Glycosylated with O-linked glycans. Glycosylation is essential for proper subcellular location. In terms of processing, cleaved at acidic pH.

The protein resides in the virion membrane. The protein localises to the host Golgi apparatus membrane. It localises to the host endoplasmic reticulum membrane. In terms of biological role, forms the spikes present at the surface of the virion together with Glycoprotein C. They are able to attach the virion to a cell receptor and to promote fusion of membranes after endocytosis of the virion. Plays a role in virus binding and/or entry into the vector midgut. Its function is as follows. Forms the spikes present at the surface of the virion together with Glycoprotein N. They are able to attach the virion to a cell receptor and to promote fusion of membranes after endocytosis of the virion. Probable class II fusion protein. This is Envelopment polyprotein (GP) from Tomato spotted wilt virus (strain Brazilian Br-01) (TSWV).